Reading from the N-terminus, the 346-residue chain is tRNA N6-adenosine threonylcarbamoyltransferase (346 aa).

Fe cation-binding residues include His-111 and His-115. Substrate is bound by residues Leu-134 to Gly-138, Asp-167, Gly-180, and Asn-277. Residue Asp-305 participates in Fe cation binding.

The protein belongs to the KAE1 / TsaD family. The cofactor is Fe(2+).

It is found in the cytoplasm. It carries out the reaction L-threonylcarbamoyladenylate + adenosine(37) in tRNA = N(6)-L-threonylcarbamoyladenosine(37) in tRNA + AMP + H(+). Its function is as follows. Required for the formation of a threonylcarbamoyl group on adenosine at position 37 (t(6)A37) in tRNAs that read codons beginning with adenine. Is involved in the transfer of the threonylcarbamoyl moiety of threonylcarbamoyl-AMP (TC-AMP) to the N6 group of A37, together with TsaE and TsaB. TsaD likely plays a direct catalytic role in this reaction. The sequence is that of tRNA N6-adenosine threonylcarbamoyltransferase from Bordetella pertussis (strain Tohama I / ATCC BAA-589 / NCTC 13251).